The sequence spans 518 residues: Protein CYCLOPS (518 aa).

The segment at 401 to 451 is disordered; it reads DKKRKSLERYGSITSAVSDDKGDTTKKRRVERSRKMAEAKERNSTPSVPSD. 2 short sequence motifs (nuclear localization signal) span residues 402 to 405 and 426 to 429; these read KKRK and KKRR. Over residues 433 to 443 the composition is skewed to basic and acidic residues; it reads SRKMAEAKERN. Positions 452–518 form a coiled coil; the sequence is MQAVLKRCEN…ERILSETEKM (67 aa).

This sequence belongs to the CYCLOPS family. As to quaternary structure, forms homodimers. Interacts with CCAMK. In terms of processing, phosphorylated at the N-terminus by CCAMK. In terms of tissue distribution, expressed in roots.

Its subcellular location is the nucleus. Involved in symbiotic signaling. Required for root infection by symbiotic rhizobia, infection thread (IT) formation, and nodule development. Probably not involved in nodule organogenesis. Involved in arbuscular mycorrhizal (AM) symbiosis. Required for fungal infection of the outer cortical cell layers, and for arbuscule development during the AM symbiosis, by binding, as a complex comprising CCaMK, CYCLOPS, and DELLA, to RAM1 promoter cis element thus promoting its expression. Acts downstream of CCAMK. Binds to the promoter of ERN1 and strongly transactivates ERN1, a transcriptional regulator required for nodulation. The chain is Protein CYCLOPS from Lotus japonicus (Lotus corniculatus var. japonicus).